We begin with the raw amino-acid sequence, 341 residues long: MEPAFGEVNQLGGVFVNGRPLPNAIRLRIVELAQLGIRPCDISRQLRVSHGCVSKILARYNETGSILPGAIGGSKPRVTTPTVVKHIRTYKQRDPGIFAWEIRDRLLADGVCDKYNVPSVSSISRILRNKIGNLAQQGHYDSYKQHQPTPQPALPYNHIYSYPSPITAAAAKVPTPPGVPAIPGSVAMPRTWPSSHSVTDILGIRSITDQVSDSSPYHSPKVEEWSSLGRNNFPAAAPHAVNGLEKGALEQEAKYGQAPNGLPAVGSFVSASSMAPYPTPAQVSPYMTYSAAPSGYVAGHGWQHAGGTSLSPHNCDIPASLAFKGMQAAREGSHSVTASVL.

The paired DNA-binding region spans Ala4–Lys130. The segment at Glu7–Thr63 is PAI subdomain. An RED subdomain region spans residues Thr82 to Lys130. The tract at residues Ala168–Pro189 is interaction with KDM5B.

In terms of assembly, interacts with KDM5B.

The protein localises to the nucleus. Functionally, transcription factor required for normal development of thymus, parathyroid glands, ultimobranchial bodies, teeth, skeletal elements of skull and larynx as well as distal limbs. The polypeptide is Paired box protein Pax-9 (PAX9) (Pan troglodytes (Chimpanzee)).